A 251-amino-acid polypeptide reads, in one-letter code: MRSGVIAQKVGMTRVFTDAGEHVPVTVLKVDQCQVVAHRTVEKNGYVALQVGVGKAKVKNVSKAERGRFAIAKVEPKRKLAEFRVSEDALIPVGAEITADHFIPGQFVDVTGITTGKGFAGGMKRWNFGGLRASHGVSISHRSIGSTGGRQDPGKTFKNKKMPGHLGVERVTTQNLRVVRTDPERGLILVEGAVPGVAGGWIHVRDAVKRKLPAEAPMPGKFRELADGAAPAGAVQAAQAAPEAPAAEENA.

2 disordered regions span residues 140 to 162 (SHRSIGSTGGRQDPGKTFKNKKM) and 229 to 251 (AAPAGAVQAAQAAPEAPAAEENA). Q151 carries the N5-methylglutamine modification.

Belongs to the universal ribosomal protein uL3 family. In terms of assembly, part of the 50S ribosomal subunit. Forms a cluster with proteins L14 and L19. In terms of processing, methylated by PrmB.

One of the primary rRNA binding proteins, it binds directly near the 3'-end of the 23S rRNA, where it nucleates assembly of the 50S subunit. This chain is Large ribosomal subunit protein uL3, found in Methylobacterium nodulans (strain LMG 21967 / CNCM I-2342 / ORS 2060).